The primary structure comprises 351 residues: UDP-3-O-acylglucosamine N-acyltransferase (351 aa).

The active-site Proton acceptor is H239.

This sequence belongs to the transferase hexapeptide repeat family. LpxD subfamily. Homotrimer.

The catalysed reaction is a UDP-3-O-[(3R)-3-hydroxyacyl]-alpha-D-glucosamine + a (3R)-hydroxyacyl-[ACP] = a UDP-2-N,3-O-bis[(3R)-3-hydroxyacyl]-alpha-D-glucosamine + holo-[ACP] + H(+). Its pathway is bacterial outer membrane biogenesis; LPS lipid A biosynthesis. Its function is as follows. Catalyzes the N-acylation of UDP-3-O-acylglucosamine using 3-hydroxyacyl-ACP as the acyl donor. Is involved in the biosynthesis of lipid A, a phosphorylated glycolipid that anchors the lipopolysaccharide to the outer membrane of the cell. The polypeptide is UDP-3-O-acylglucosamine N-acyltransferase (Vibrio cholerae serotype O1 (strain ATCC 39315 / El Tor Inaba N16961)).